A 475-amino-acid polypeptide reads, in one-letter code: Tryptophan synthase beta chain 2, chloroplastic (475 aa).

Positions 1–21 (MATASTAATFRPSSVSASSEL) are enriched in polar residues. Residues 1–44 (MATASTAATFRPSSVSASSELTHLRSPSKLPKFTPLPSARSRSS) form a disordered region. Residues 1-51 (MATASTAATFRPSSVSASSELTHLRSPSKLPKFTPLPSARSRSSSSFSVSC) constitute a chloroplast transit peptide. Thr52 bears the N-acetylthreonine mark. Lys170 bears the N6-(pyridoxal phosphate)lysine mark.

The protein belongs to the TrpB family. Tetramer of two alpha and two beta chains. The cofactor is pyridoxal 5'-phosphate.

It localises to the plastid. The protein resides in the chloroplast. The enzyme catalyses (1S,2R)-1-C-(indol-3-yl)glycerol 3-phosphate + L-serine = D-glyceraldehyde 3-phosphate + L-tryptophan + H2O. The protein operates within amino-acid biosynthesis; L-tryptophan biosynthesis; L-tryptophan from chorismate: step 5/5. In terms of biological role, the beta subunit is responsible for the synthesis of L-tryptophan from indole and L-serine. This chain is Tryptophan synthase beta chain 2, chloroplastic (TSB2), found in Arabidopsis thaliana (Mouse-ear cress).